The following is a 143-amino-acid chain: Large ribosomal subunit protein bL17 (143 aa).

It belongs to the bacterial ribosomal protein bL17 family. Part of the 50S ribosomal subunit. Contacts protein L32.

The polypeptide is Large ribosomal subunit protein bL17 (Chelativorans sp. (strain BNC1)).